The primary structure comprises 344 residues: Holliday junction branch migration complex subunit RuvB (344 aa).

Positions 1-181 (MERIVTPAEM…FGVLCAMEYY (181 aa)) are large ATPase domain (RuvB-L). Residues leucine 20, arginine 21, glycine 62, lysine 65, threonine 66, threonine 67, 128–130 (EDY), arginine 171, tyrosine 181, and arginine 218 each bind ATP. Residue threonine 66 participates in Mg(2+) binding. The small ATPAse domain (RuvB-S) stretch occupies residues 182–252 (DENQLKEIVI…EAREALELLE (71 aa)). The interval 255 to 344 (NQGFDKVDNK…SNKGQTSFFK (90 aa)) is head domain (RuvB-H). Positions 310 and 315 each coordinate DNA.

This sequence belongs to the RuvB family. Homohexamer. Forms an RuvA(8)-RuvB(12)-Holliday junction (HJ) complex. HJ DNA is sandwiched between 2 RuvA tetramers; dsDNA enters through RuvA and exits via RuvB. An RuvB hexamer assembles on each DNA strand where it exits the tetramer. Each RuvB hexamer is contacted by two RuvA subunits (via domain III) on 2 adjacent RuvB subunits; this complex drives branch migration. In the full resolvosome a probable DNA-RuvA(4)-RuvB(12)-RuvC(2) complex forms which resolves the HJ.

Its subcellular location is the cytoplasm. The enzyme catalyses ATP + H2O = ADP + phosphate + H(+). The RuvA-RuvB-RuvC complex processes Holliday junction (HJ) DNA during genetic recombination and DNA repair, while the RuvA-RuvB complex plays an important role in the rescue of blocked DNA replication forks via replication fork reversal (RFR). RuvA specifically binds to HJ cruciform DNA, conferring on it an open structure. The RuvB hexamer acts as an ATP-dependent pump, pulling dsDNA into and through the RuvAB complex. RuvB forms 2 homohexamers on either side of HJ DNA bound by 1 or 2 RuvA tetramers; 4 subunits per hexamer contact DNA at a time. Coordinated motions by a converter formed by DNA-disengaged RuvB subunits stimulates ATP hydrolysis and nucleotide exchange. Immobilization of the converter enables RuvB to convert the ATP-contained energy into a lever motion, pulling 2 nucleotides of DNA out of the RuvA tetramer per ATP hydrolyzed, thus driving DNA branch migration. The RuvB motors rotate together with the DNA substrate, which together with the progressing nucleotide cycle form the mechanistic basis for DNA recombination by continuous HJ branch migration. Branch migration allows RuvC to scan DNA until it finds its consensus sequence, where it cleaves and resolves cruciform DNA. This chain is Holliday junction branch migration complex subunit RuvB, found in Clostridium botulinum (strain Alaska E43 / Type E3).